The following is a 349-amino-acid chain: Protein-glutamate methylesterase/protein-glutamine glutaminase (349 aa).

Residues 5–122 (RVLSVDDSAL…REGMLAYSEM (118 aa)) enclose the Response regulatory domain. Asp56 is modified (4-aspartylphosphate). The region spanning 152-344 (LLSSEKLIAI…QQMLAKISAG (193 aa)) is the CheB-type methylesterase domain. Residues Ser164, His190, and Asp286 contribute to the active site.

The protein belongs to the CheB family. In terms of processing, phosphorylated by CheA. Phosphorylation of the N-terminal regulatory domain activates the methylesterase activity.

It localises to the cytoplasm. It carries out the reaction [protein]-L-glutamate 5-O-methyl ester + H2O = L-glutamyl-[protein] + methanol + H(+). The enzyme catalyses L-glutaminyl-[protein] + H2O = L-glutamyl-[protein] + NH4(+). Functionally, involved in chemotaxis. Part of a chemotaxis signal transduction system that modulates chemotaxis in response to various stimuli. Catalyzes the demethylation of specific methylglutamate residues introduced into the chemoreceptors (methyl-accepting chemotaxis proteins or MCP) by CheR. Also mediates the irreversible deamidation of specific glutamine residues to glutamic acid. The chain is Protein-glutamate methylesterase/protein-glutamine glutaminase from Escherichia coli O6:K15:H31 (strain 536 / UPEC).